The chain runs to 107 residues: Large ribosomal subunit protein uL24 (107 aa).

This sequence belongs to the universal ribosomal protein uL24 family. As to quaternary structure, part of the 50S ribosomal subunit.

Its function is as follows. One of two assembly initiator proteins, it binds directly to the 5'-end of the 23S rRNA, where it nucleates assembly of the 50S subunit. In terms of biological role, one of the proteins that surrounds the polypeptide exit tunnel on the outside of the subunit. This is Large ribosomal subunit protein uL24 from Nitrosomonas eutropha (strain DSM 101675 / C91 / Nm57).